We begin with the raw amino-acid sequence, 118 residues long: Nucleoid-associated protein TM_0687 (118 aa).

It belongs to the YbaB/EbfC family. In terms of assembly, homodimer.

It is found in the cytoplasm. The protein localises to the nucleoid. Binds to DNA and alters its conformation. May be involved in regulation of gene expression, nucleoid organization and DNA protection. The polypeptide is Nucleoid-associated protein TM_0687 (Thermotoga maritima (strain ATCC 43589 / DSM 3109 / JCM 10099 / NBRC 100826 / MSB8)).